The following is a 430-amino-acid chain: C4-dicarboxylate transport protein (430 aa).

8 consecutive transmembrane segments (helical) span residues 9–29 (VLYVQVIFAIIVGVILGHFYP), 45–65 (LIKMVIGPIIFCTVVTGIAGM), 79–99 (LLYFEIVSTFALLLGLAATHL), 149–169 (GEILQILLIALLFGSVLAHLG), 185–205 (VLFGIVHIVTKLAPIGAFGAM), 223–243 (LIGTFYLTSVVFVLVVLGAIA), 308–328 (IYMTMAVLFIAQATNIELTWM), and 356–376 (AATLAVVPTIPLSGMVLILGI).

This sequence belongs to the dicarboxylate/amino acid:cation symporter (DAACS) (TC 2.A.23) family.

It localises to the cell inner membrane. In terms of biological role, responsible for the transport of dicarboxylates such as succinate, fumarate, and malate from the periplasm across the membrane. In Burkholderia orbicola (strain MC0-3), this protein is C4-dicarboxylate transport protein.